The sequence spans 1179 residues: Integrin alpha-7 (1179 aa).

An N-terminal signal peptide occupies residues 1–33 (MARIPRCDFLRPPGIYYLITSLLAGLFLPPAIA). At 34-1076 (FNLDVMGAIR…YLDPMAVVVE (1043 aa)) the chain is on the extracellular side. FG-GAP repeat units lie at residues 38–103 (VMGA…ETDC), 110–175 (RGAN…IRDE), 185–238 (EGRP…SPDL), 292–349 (DRLT…ATRL), 350–411 (IPEV…HWAD), 412–467 (ISPL…GVVV), and 471–530 (QVLE…IDPR). A glycan (N-linked (GlcNAc...) asparagine) is linked at Asn-86. 3 disulfide bridges follow: Cys-94-Cys-103, Cys-140-Cys-163, and Cys-184-Cys-197. Ca(2+) contacts are provided by Asp-372, Asn-374, Asp-376, Asp-380, Asp-434, Asn-436, Asp-438, Asp-442, Asp-492, Asp-494, Asn-496, Tyr-498, and Asp-500. Intrachain disulfides connect Cys-539/Cys-546, Cys-552/Cys-615, Cys-681/Cys-687, Cys-781/Cys-792, Cys-939/Cys-993, and Cys-999/Cys-1004. The N-linked (GlcNAc...) asparagine glycan is linked to Asn-784. Residues 952–961 (SRDRRRRELG) are compositionally biased toward basic and acidic residues. The segment at 952–978 (SRDRRRRELGQPEPQEPPEKVEPSTSW) is disordered. N-linked (GlcNAc...) asparagine glycosylation occurs at Asn-988. 2 N-linked (GlcNAc...) asparagine glycosylation sites follow: Asn-1023 and Asn-1043. The helical transmembrane segment at 1077–1102 (GVPWWVILLGVLAGLLVLALLVLLLW) threads the bilayer. The Cytoplasmic portion of the chain corresponds to 1103 to 1179 (KLGFFKRAKH…PDGHPVPATA (77 aa)). The GFFKR motif motif lies at 1105–1109 (GFFKR). Residues 1134–1153 (KEEKTGTIQRSNWGNSQWEG) are disordered. Residues 1139–1152 (GTIQRSNWGNSQWE) show a composition bias toward polar residues. Tandem repeats lie at residues 1155-1158 (DAHP), 1163-1166 (DWHP), and 1171-1174 (DGHP). Residues 1155–1174 (DAHPILAADWHPELGPDGHP) form a 3 X 4 AA repeats of D-X-H-P region.

Belongs to the integrin alpha chain family. As to quaternary structure, heterodimer of an alpha and a beta subunit. The alpha subunit is composed of a heavy and a light chain linked by a disulfide bond. Alpha-7 associates with beta-1. Interacts with COMP. Interacts (via C-terminus intracellular tail region) with CIB1; the interaction is stabilized/increased in a calcium- and magnesium-dependent manner. Post-translationally, ADP-ribosylated on at least two sites of the extracellular domain in skeletal myotubes (in vitro). In terms of processing, no proteolytic cleavage to produce the 70 kDa form is seen due to the presence of a Gly instead of an arginine residue at position 647. As to expression, isoforms containing segment X2 are found in adult heart, lung and skeletal muscle. Isoforms containing segment X1 are expressed in adult heart, lung and in proliferating skeletal myoblasts but not in adult skeletal muscle. Isoforms containing segment a are exclusively found in skeletal muscle. Isoforms containing segment B are widely expressed. In muscle fibers isoforms containing segment A and B are expressed at myotendinous and neuromuscular junctions; isoforms containing segment C are expressed at neuromuscular junctions and at extrasynaptic sites.

The protein localises to the membrane. Integrin alpha-7/beta-1 is the primary laminin receptor on skeletal myoblasts and adult myofibers. During myogenic differentiation, it may induce changes in the shape and mobility of myoblasts, and facilitate their localization at laminin-rich sites of secondary fiber formation. Involved in the maintenance of the myofibers cytoarchitecture as well as for their anchorage, viability and functional integrity. Mice carrying a ITGA7 null allele are viable and fertile, but show progressive muscular dystrophy starting soon after birth, but with a distinct variability in different muscle types. Required to promote contractile phenotype acquisition in differentiated airway smooth muscle (ASM) cells. Acts as a Schwann cell receptor for laminin-2. Acts as a receptor of COMP and mediates its effect on vascular smooth muscle cells (VSMCs) maturation. In Mus musculus (Mouse), this protein is Integrin alpha-7 (Itga7).